The sequence spans 635 residues: DNA topoisomerase 4 subunit B (635 aa).

ATP contacts are provided by residues Y5, N45, D72, 113-119 (GLHGVGA), and K340. Residues 422 to 537 (RELFVVEGDS…KGHIYLALPP (116 aa)) enclose the Toprim domain. 3 residues coordinate Mg(2+): E428, D502, and D504.

Belongs to the type II topoisomerase family. ParE type 2 subfamily. Heterotetramer composed of ParC and ParE. It depends on Mg(2+) as a cofactor. Mn(2+) serves as cofactor. The cofactor is Ca(2+).

It catalyses the reaction ATP-dependent breakage, passage and rejoining of double-stranded DNA.. Its function is as follows. Topoisomerase IV is essential for chromosome segregation. It relaxes supercoiled DNA. Performs the decatenation events required during the replication of a circular DNA molecule. This chain is DNA topoisomerase 4 subunit B, found in Mycoplasma pneumoniae (strain ATCC 29342 / M129 / Subtype 1) (Mycoplasmoides pneumoniae).